The primary structure comprises 173 residues: CDP-archaeol synthase (173 aa).

The next 5 helical transmembrane spans lie at 15-35, 59-79, 84-104, 118-138, and 142-162; these read GLWF…FGGG, GFIV…LVVG, AGDG…GSFV, VLDQ…VYGW, and GWVL…TNVI.

Belongs to the CDP-archaeol synthase family. Mg(2+) serves as cofactor.

The protein localises to the cell membrane. It carries out the reaction 2,3-bis-O-(geranylgeranyl)-sn-glycerol 1-phosphate + CTP + H(+) = CDP-2,3-bis-O-(geranylgeranyl)-sn-glycerol + diphosphate. It functions in the pathway membrane lipid metabolism; glycerophospholipid metabolism. Its function is as follows. Catalyzes the formation of CDP-2,3-bis-(O-geranylgeranyl)-sn-glycerol (CDP-archaeol) from 2,3-bis-(O-geranylgeranyl)-sn-glycerol 1-phosphate (DGGGP) and CTP. This reaction is the third ether-bond-formation step in the biosynthesis of archaeal membrane lipids. This chain is CDP-archaeol synthase, found in Methanopyrus kandleri (strain AV19 / DSM 6324 / JCM 9639 / NBRC 100938).